The primary structure comprises 323 residues: Methionyl-tRNA formyltransferase (323 aa).

Residue 113-116 participates in (6S)-5,6,7,8-tetrahydrofolate binding; it reads SLLP.

It belongs to the Fmt family.

The catalysed reaction is L-methionyl-tRNA(fMet) + (6R)-10-formyltetrahydrofolate = N-formyl-L-methionyl-tRNA(fMet) + (6S)-5,6,7,8-tetrahydrofolate + H(+). Its function is as follows. Attaches a formyl group to the free amino group of methionyl-tRNA(fMet). The formyl group appears to play a dual role in the initiator identity of N-formylmethionyl-tRNA by promoting its recognition by IF2 and preventing the misappropriation of this tRNA by the elongation apparatus. This Porphyromonas gingivalis (strain ATCC BAA-308 / W83) protein is Methionyl-tRNA formyltransferase.